We begin with the raw amino-acid sequence, 151 residues long: Deoxyuridine 5'-triphosphate nucleotidohydrolase (151 aa).

Substrate is bound by residues 70–72 (RSG), N83, 87–89 (LID), and M97.

This sequence belongs to the dUTPase family. Mg(2+) is required as a cofactor.

The catalysed reaction is dUTP + H2O = dUMP + diphosphate + H(+). Its pathway is pyrimidine metabolism; dUMP biosynthesis; dUMP from dCTP (dUTP route): step 2/2. Its function is as follows. This enzyme is involved in nucleotide metabolism: it produces dUMP, the immediate precursor of thymidine nucleotides and it decreases the intracellular concentration of dUTP so that uracil cannot be incorporated into DNA. The chain is Deoxyuridine 5'-triphosphate nucleotidohydrolase from Histophilus somni (strain 129Pt) (Haemophilus somnus).